A 211-amino-acid chain; its full sequence is C-type lectin domain family 2 member L (211 aa).

A disordered region spans residues 1–53 (MEPAREPPARARPPPPAARPAPAAPRPRSPAEAEARGPEGLLRRSGSGYEGST). Pro residues predominate over residues 10 to 28 (RARPPPPAARPAPAAPRPR). The residue at position 29 (S29) is a Phosphoserine. A helical membrane pass occupies residues 66-86 (LLLGAIAVLLFAILVVMSILA). Residues 104-206 (YGRKCYYFSE…CLTTRPWVCS (103 aa)) enclose the C-type lectin domain. Cystine bridges form between C125–C205 and C184–C197.

It is found in the membrane. The protein is C-type lectin domain family 2 member L (Clec2l) of Mus musculus (Mouse).